A 371-amino-acid polypeptide reads, in one-letter code: Cytochrome b (371 aa).

The next 4 helical transmembrane spans lie at 25-45, 69-90, 105-125, and 170-190; these read FGSM…FLAV, WMMQ…YIHI, WMSG…GYVL, and FFAL…LHII. Residues histidine 75 and histidine 89 each contribute to the heme b site. Heme b-binding residues include histidine 174 and histidine 188. Histidine 193 contacts a ubiquinone. 4 helical membrane passes run 218-238, 280-300, 312-332, and 339-358; these read HKDL…MSFF, LGGA…PFTH, LSQL…WAAT, and FIII…LSFP.

It belongs to the cytochrome b family. In terms of assembly, the cytochrome bc1 complex contains 3 respiratory subunits (MT-CYB, CYC1 and UQCRFS1), 2 core proteins (UQCRC1 and UQCRC2) and probably 6 low-molecular weight proteins. Heme b is required as a cofactor.

It is found in the mitochondrion inner membrane. In terms of biological role, component of the ubiquinol-cytochrome c reductase complex (complex III or cytochrome b-c1 complex) that is part of the mitochondrial respiratory chain. The b-c1 complex mediates electron transfer from ubiquinol to cytochrome c. Contributes to the generation of a proton gradient across the mitochondrial membrane that is then used for ATP synthesis. The polypeptide is Cytochrome b (MT-CYB) (Apodora papuana (Papuan olive python)).